The primary structure comprises 279 residues: Estrogen receptor beta (279 aa).

In terms of domain architecture, NR LBD spans Ser27–His261.

The protein belongs to the nuclear hormone receptor family. NR3 subfamily. Binds DNA as a homodimer. Can form a heterodimer with ESR1. Interacts with NCOA1, NCOA3, NCOA5 and NCOA6 coactivators, leading to a strong increase of transcription of target genes. Interacts with UBE1C and AKAP13. Interacts with DNTTIP2. Interacts with CCDC62 in the presence of estradiol/E2; this interaction seems to enhance the transcription of target genes. Interacts with DNAAF4. Interacts with PRMT2. Interacts with CCAR2 (via N-terminus) in a ligand-independent manner. Interacts with RBM39, in the presence of estradiol (E2). Interacts with STUB1/CHIP.

Its subcellular location is the nucleus. In terms of biological role, nuclear hormone receptor. Binds estrogens with an affinity similar to that of ESR1/ER-alpha, and activates expression of reporter genes containing estrogen response elements (ERE) in an estrogen-dependent manner. The chain is Estrogen receptor beta (ESR2) from Macaca mulatta (Rhesus macaque).